Here is a 1051-residue protein sequence, read N- to C-terminus: MANKHNLCKKRSLDLSEESTSESHAKRQCTENLFWPEGEDDDSFFSNAHLEDLLDGRKEELFGTQATTSTNKMTQSGSDDGLGLFADTSFPSAQSVPPNSASKPDEASAPTDKHQIDLADEENADKLFKKINLNDLSIAEMEDIFHGADDFSDPMVQNTQLFLDAMTFKKPKTPEKLLAPLKDDSMSFISKSVIEGLVQGTQYVTCEELKNQSLLDPVNWETQAFADFEKNNQDIDKFPSKGEFYGLPDKVKKMILEHKGINSLYEWQDECLNLPAIRQRKNLIYALPTSGGKTLVAEILMLRELLCRERNVLFILPYVSIVQEKVSAMSPFAIDLDFIVEEYTAGKGKCPPQPRRKRRSLFIASIEKGAVLMDSLIDVQRPHEIGLVVVDELHLIGEKGRGATLEAFLTKVMFLNANIQIVGMSATIGNLSEISSFLNADVYTRGFRPVELKEYIKCGPDLLEINSAGQTLEEIFVPSRSVEYNYSEAVKRADPDHLAGLISECAPEHCCLVFCPSRKNCENVALLLSRIVPKHKFFEHRRSEKLDLMDALDKMCGILSPVLAKTLPYGIAYHHSGLTTDERKYIETAYRFGVVTVICCTSTLAAGVNLPAKRVIIRAPYVGQEFLTLCKYKQMVGRAGRAGLGEAGESILIAQSKDNLLVGQMLFSPMDKALSSLDQNEAVGLQSLILSVVGLNLAECRRDLNRLVNSTLLSVQAKSLEVAVNEIVLRILREMFKNKVLQLAEPQAKSKINSSDIITSQDVSQANRPAGDRRLLIGQSTPFKLTNIGRAAFKAGIDYKRANAIHKELKQAQQQLILTNYLHLLYLVVCFNSNERGDELFPADASILFGVYTSLPLDSQAMFKQLGFTEAHAARLFKTQSVQGPLSLQLNRLYKVLILADILNLLPIPSVASKYNVERGTLQHLISQSTAAASAIVRLCEELEEFWCYKPLFERILHKMDRCGTFELEPLMELPAVKINRARQLYAAGFQTIGDIARVRPSHLVQSLEHMPLRVATEIVSAAKIILMKKLDHLEEETENLKDCLKTSDKN.

Residues methionine 1 to lysine 10 are compositionally biased toward basic residues. 2 disordered regions span residues methionine 1–glutamine 28 and leucine 61–aspartate 112. Composition is skewed to polar residues over residues threonine 64–serine 78 and serine 89–serine 102. Residues lysine 103–aspartate 112 show a composition bias toward basic and acidic residues. The Helicase ATP-binding domain occupies leucine 274–glycine 446. Residue leucine 287–threonine 294 participates in ATP binding. The short motif at aspartate 391 to histidine 394 is the DEAH box element. Residues histidine 497–isoleucine 689 enclose the Helicase C-terminal domain.

This sequence belongs to the helicase family. SKI2 subfamily.

It localises to the nucleus. It is found in the chromosome. It carries out the reaction Couples ATP hydrolysis with the unwinding of duplex DNA by translocating in the 3'-5' direction.. It catalyses the reaction ATP + H2O = ADP + phosphate + H(+). Single-stranded 3'-5' DNA helicase that plays a key role in homology-driven double-strand break (DSB) repair. Involved in different DSB repair mechanisms that are guided by annealing of extensive stretches of complementary bases at break ends, such as microhomology-mediated end-joining (MMEJ), single-strand annealing (SSA) or synthesis-dependent strand annealing (SDSA). This chain is Helicase POLQ-like, found in Drosophila melanogaster (Fruit fly).